Reading from the N-terminus, the 71-residue chain is Phosphatidylinositol N-acetylglucosaminyltransferase subunit Y (71 aa).

Over 1–3 the chain is Cytoplasmic; sequence MFL. Residues 4–26 traverse the membrane as a helical segment; sequence SLPMLTVLIPLVSLAGLFYSASV. At 27–44 the chain is on the lumenal side; that stretch reads EDDFPQGCTSTTSLCFYS. The helical transmembrane segment at 45–65 threads the bilayer; sequence LLLPITIPVYVFFHLWTWMGI. Over 66–71 the chain is Cytoplasmic; that stretch reads KLFRHN.

In terms of assembly, component of the glycosylphosphatidylinositol-N-acetylglucosaminyltransferase (GPI-GnT) complex composed at least by PIGA, PIGC, PIGH, PIGP, PIGQ, PIGY and DPM2. Interacts directly with PIGA; this interaction regulates glycosylphosphatidylinositol-N-acetylglucosaminyltransferase activity. Does not interact with Ras proteins.

It localises to the endoplasmic reticulum membrane. It functions in the pathway glycolipid biosynthesis; glycosylphosphatidylinositol-anchor biosynthesis. Part of the glycosylphosphatidylinositol-N-acetylglucosaminyltransferase (GPI-GnT) complex that catalyzes the transfer of N-acetylglucosamine from UDP-N-acetylglucosamine to phosphatidylinositol and participates in the first step of GPI biosynthesis. May act by regulating the catalytic subunit PIGA. The polypeptide is Phosphatidylinositol N-acetylglucosaminyltransferase subunit Y (Bos taurus (Bovine)).